The chain runs to 418 residues: Protein fuzzy homolog (418 aa).

Belongs to the fuzzy family. Component of the CPLANE (ciliogenesis and planar polarity effectors) complex, composed of INTU, FUZ and WDPCP. Interacts with CPLANE2. Interacts with CPLANE1.

The protein localises to the cytoplasm. The protein resides in the cytoskeleton. It localises to the cilium basal body. Its function is as follows. Probable planar cell polarity effector involved in cilium biogenesis. May regulate protein and membrane transport to the cilium. Proposed to function as core component of the CPLANE (ciliogenesis and planar polarity effectors) complex involved in the recruitment of peripheral IFT-A proteins to basal bodies. May regulate the morphogenesis of hair follicles which depends on functional primary cilia. Binds phosphatidylinositol 3-phosphate with highest affinity, followed by phosphatidylinositol 4-phosphate and phosphatidylinositol 5-phosphate. The protein is Protein fuzzy homolog (FUZ) of Homo sapiens (Human).